The chain runs to 286 residues: 3-hydroxyanthranilate 3,4-dioxygenase (286 aa).

The domain A (catalytic) stretch occupies residues 1–160; it reads MERPVRVKAW…SEQYRTGKPN (160 aa). An O2-binding site is contributed by R43. Residues H47, E53, and H91 each coordinate Fe cation. E53 contacts substrate. R95 and E105 together coordinate substrate. Residues 161 to 177 form a linker region; it reads PDQLLKEPPFPLSTRSV. Residues 178–286 are domain B; it reads MEPMCLEAWL…QDPACKKSLG (109 aa).

This sequence belongs to the 3-HAO family. As to quaternary structure, monomer. Fe(2+) is required as a cofactor.

It is found in the cytoplasm. The protein resides in the cytosol. The enzyme catalyses 3-hydroxyanthranilate + O2 = (2Z,4Z)-2-amino-3-carboxymuconate 6-semialdehyde. Its pathway is cofactor biosynthesis; NAD(+) biosynthesis; quinolinate from L-kynurenine: step 3/3. Catalyzes the oxidative ring opening of 3-hydroxyanthranilate to 2-amino-3-carboxymuconate semialdehyde, which spontaneously cyclizes to quinolinate. The polypeptide is 3-hydroxyanthranilate 3,4-dioxygenase (Bos taurus (Bovine)).